The chain runs to 61 residues: Small ribosomal subunit protein uS14 (61 aa).

Zn(2+) is bound by residues Cys24, Cys27, Cys40, and Cys43.

It belongs to the universal ribosomal protein uS14 family. Zinc-binding uS14 subfamily. As to quaternary structure, part of the 30S ribosomal subunit. Contacts proteins S3 and S10. The cofactor is Zn(2+).

Binds 16S rRNA, required for the assembly of 30S particles and may also be responsible for determining the conformation of the 16S rRNA at the A site. The chain is Small ribosomal subunit protein uS14 from Treponema denticola (strain ATCC 35405 / DSM 14222 / CIP 103919 / JCM 8153 / KCTC 15104).